The following is a 228-amino-acid chain: ATP-dependent dethiobiotin synthetase BioD (228 aa).

Position 14 to 19 (14 to 19 (DAGKTL)) interacts with ATP. Mg(2+) is bound at residue Thr18. The active site involves Lys39. ATP is bound by residues Asp56, 117 to 120 (EGAG), and 206 to 208 (PRL). Asp56 and Glu117 together coordinate Mg(2+).

Belongs to the dethiobiotin synthetase family. In terms of assembly, homodimer. Mg(2+) is required as a cofactor.

Its subcellular location is the cytoplasm. It carries out the reaction (7R,8S)-7,8-diammoniononanoate + CO2 + ATP = (4R,5S)-dethiobiotin + ADP + phosphate + 3 H(+). The protein operates within cofactor biosynthesis; biotin biosynthesis; biotin from 7,8-diaminononanoate: step 1/2. Catalyzes a mechanistically unusual reaction, the ATP-dependent insertion of CO2 between the N7 and N8 nitrogen atoms of 7,8-diaminopelargonic acid (DAPA, also called 7,8-diammoniononanoate) to form a ureido ring. This chain is ATP-dependent dethiobiotin synthetase BioD, found in Cellvibrio japonicus (strain Ueda107) (Pseudomonas fluorescens subsp. cellulosa).